We begin with the raw amino-acid sequence, 180 residues long: ATP synthase subunit delta (180 aa).

Belongs to the ATPase delta chain family. In terms of assembly, F-type ATPases have 2 components, F(1) - the catalytic core - and F(0) - the membrane proton channel. F(1) has five subunits: alpha(3), beta(3), gamma(1), delta(1), epsilon(1). F(0) has three main subunits: a(1), b(2) and c(10-14). The alpha and beta chains form an alternating ring which encloses part of the gamma chain. F(1) is attached to F(0) by a central stalk formed by the gamma and epsilon chains, while a peripheral stalk is formed by the delta and b chains.

It is found in the cell inner membrane. In terms of biological role, f(1)F(0) ATP synthase produces ATP from ADP in the presence of a proton or sodium gradient. F-type ATPases consist of two structural domains, F(1) containing the extramembraneous catalytic core and F(0) containing the membrane proton channel, linked together by a central stalk and a peripheral stalk. During catalysis, ATP synthesis in the catalytic domain of F(1) is coupled via a rotary mechanism of the central stalk subunits to proton translocation. Functionally, this protein is part of the stalk that links CF(0) to CF(1). It either transmits conformational changes from CF(0) to CF(1) or is implicated in proton conduction. The polypeptide is ATP synthase subunit delta (Cupriavidus necator (strain ATCC 17699 / DSM 428 / KCTC 22496 / NCIMB 10442 / H16 / Stanier 337) (Ralstonia eutropha)).